The following is a 624-amino-acid chain: Glutaminase 2 (624 aa).

The tract at residues Met-1–Tyr-20 is disordered. The glutaminase stretch occupies residues Gly-43 to Leu-325. Residues Ser-85, Asn-134, Glu-178, Asn-185, Tyr-209, Tyr-261, and Val-279 each coordinate substrate. In terms of domain architecture, STAS spans Gln-355–Ala-466. Residue Leu-491–Ala-608 participates in a nucleoside 3',5'-cyclic phosphate binding.

It belongs to the glutaminase family. As to quaternary structure, homotetramer.

The catalysed reaction is L-glutamine + H2O = L-glutamate + NH4(+). This Bradyrhizobium diazoefficiens (strain JCM 10833 / BCRC 13528 / IAM 13628 / NBRC 14792 / USDA 110) protein is Glutaminase 2 (glsA2).